A 160-amino-acid polypeptide reads, in one-letter code: Cytochrome b6-f complex subunit 4 (160 aa).

4 consecutive transmembrane segments (helical) span residues 36–56, 68–88, 95–115, and 131–151; these read LLYIFPVVILGTIACTVGLAV, PFATPLEILPEWYFFPVFQIL, FFGVLLMTSVPFGLLTVPFLE, and SVFLIGTVISLWLGFGAVLPI.

The protein belongs to the cytochrome b family. PetD subfamily. As to quaternary structure, the 4 large subunits of the cytochrome b6-f complex are cytochrome b6, subunit IV (17 kDa polypeptide, petD), cytochrome f and the Rieske protein, while the 4 small subunits are petG, petL, petM and petN. The complex functions as a dimer.

It localises to the plastid. The protein resides in the chloroplast thylakoid membrane. Functionally, component of the cytochrome b6-f complex, which mediates electron transfer between photosystem II (PSII) and photosystem I (PSI), cyclic electron flow around PSI, and state transitions. The protein is Cytochrome b6-f complex subunit 4 of Welwitschia mirabilis (Tree tumbo).